Here is a 314-residue protein sequence, read N- to C-terminus: Olfactory receptor 10A3 (314 aa).

Residues 1-25 are Extracellular-facing; sequence MKRQNQSCVVEFILLGFSNFPELQV. The N-linked (GlcNAc...) asparagine glycan is linked to N5. The chain crosses the membrane as a helical span at residues 26 to 46; sequence QLFGVFLVIYVVTLMGNAIIT. Residues 47–54 lie on the Cytoplasmic side of the membrane; it reads VIISLNQS. The helical transmembrane segment at 55 to 75 threads the bilayer; sequence LHVPMYLFLLNLSVVEVSFSA. The Extracellular segment spans residues 76–99; sequence VITPEMLVVLSTEKTMISFVGCFA. Residues C97 and C189 are joined by a disulfide bond. Residues 100-120 traverse the membrane as a helical segment; sequence QMYFILLFGGTECFLLGAMAY. The Cytoplasmic portion of the chain corresponds to 121–139; sequence DRFAAICHPLNYPVIMNRG. Residues 140–160 traverse the membrane as a helical segment; it reads VFMKLVIFSWISGIMVATVQT. The Extracellular portion of the chain corresponds to 161–197; that stretch reads TWVFSFPFCGPNEINHLFCETPPVLELVCADTFLFEI. The chain crosses the membrane as a helical span at residues 198-217; the sequence is YAFTGTILIVMVPFLLILLS. The Cytoplasmic portion of the chain corresponds to 218–237; the sequence is YIRVLFAILKMPSTTGRQKA. A helical transmembrane segment spans residues 238–258; that stretch reads FSTCASHLTSVTLFYGTANMT. The Extracellular portion of the chain corresponds to 259–271; sequence YLQPKSGYSPETK. The chain crosses the membrane as a helical span at residues 272–292; it reads KLISLAYTLLTPLLNPLIYSL. Over 293–314 the chain is Cytoplasmic; that stretch reads RNSEMKRTLIKLWRRKVILHTF.

Belongs to the G-protein coupled receptor 1 family.

It is found in the cell membrane. Odorant receptor. This is Olfactory receptor 10A3 (OR10A3) from Homo sapiens (Human).